A 593-amino-acid chain; its full sequence is Probable E3 ubiquitin-protein ligase ARI2 (593 aa).

The segment at 120–334 is TRIAD supradomain; the sequence is SMMSCDICVE…ISGHSCGRFQ (215 aa). Zn(2+) contacts are provided by cysteine 124, cysteine 127, cysteine 141, histidine 143, cysteine 146, cysteine 149, cysteine 168, cysteine 173, cysteine 215, cysteine 221, cysteine 237, cysteine 239, cysteine 244, cysteine 247, histidine 252, cysteine 257, cysteine 284, and cysteine 287. The RING-type 1 zinc finger occupies 124 to 173; that stretch reads CDICVEDVPGYQLTRMDCGHSFCNNCWTGHFTVKINEGQSKRIICMAHKC. The IBR-type zinc-finger motif lies at 195–257; the sequence is EKFDRFLLES…SSQAHSPCSC (63 aa). The segment at 284 to 312 adopts an RING-type 2; atypical zinc-finger fold; that stretch reads CPKCHKPVEKNGGCNLVTCLCRQSFCWLC. Residue cysteine 297 is part of the active site. Zn(2+) is bound by residues cysteine 302, cysteine 304, cysteine 309, cysteine 312, histidine 320, and cysteine 330.

It belongs to the RBR family. Ariadne subfamily. It depends on Zn(2+) as a cofactor. As to expression, ubiquitous.

It carries out the reaction [E2 ubiquitin-conjugating enzyme]-S-ubiquitinyl-L-cysteine + [acceptor protein]-L-lysine = [E2 ubiquitin-conjugating enzyme]-L-cysteine + [acceptor protein]-N(6)-ubiquitinyl-L-lysine.. It participates in protein modification; protein ubiquitination. Functionally, might act as an E3 ubiquitin-protein ligase, or as part of E3 complex, which accepts ubiquitin from specific E2 ubiquitin-conjugating enzymes and then transfers it to substrates. The chain is Probable E3 ubiquitin-protein ligase ARI2 (ARI2) from Arabidopsis thaliana (Mouse-ear cress).